Reading from the N-terminus, the 374-residue chain is Protein Brevis radix-like 2 (374 aa).

Disordered regions lie at residues 12–43 (NTNN…IKSL) and 57–80 (AYKS…ADSD). The segment covering 65–80 (SGSSNQNKNRSYADSD) has biased composition (polar residues). A BRX 1 domain is found at 143 to 198 (KEWVAQVEPGVLITFVSLPEGGNDMKRIRFSREMFDKWQAQKWWAENFDKVMELYN). The interval 205–316 (QSVPLPTPPR…EELSVSNASD (112 aa)) is disordered. 2 stretches are compositionally biased toward polar residues: residues 246 to 259 (SSGS…TQTQ) and 267 to 288 (GLAT…SSVD). Residues 289–307 (ESARSSFSREEEEADHSGE) are compositionally biased toward basic and acidic residues. Residues 319–374 (TEWVEQDEAGVYITIRALPDGTRELRRVRFSREKFGETNARLWWEQNRARIQQQYL) form the BRX 2 domain.

This sequence belongs to the BRX family. Expressed in roots.

Its subcellular location is the nucleus. The chain is Protein Brevis radix-like 2 (BRXL2) from Arabidopsis thaliana (Mouse-ear cress).